A 328-amino-acid polypeptide reads, in one-letter code: Protease HtpX homolog (328 aa).

The next 2 helical transmembrane spans lie at 6–26 (TAMLLAFMTALFMGVGYLIGG) and 28–48 (SGMMIAFVAAAGMNFFSYWNS). Histidine 130 contacts Zn(2+). The active site involves glutamate 131. Histidine 134 contacts Zn(2+). Helical transmembrane passes span 145 to 165 (ITATLAGAISMLGNFAFFFGG) and 172 to 192 (PLGAIGVLAAMIVAPLAAMLV). Glutamate 201 is a binding site for Zn(2+). A disordered region spans residues 279 to 328 (QYGGGTGPSVGTPTRSGSTGPAMTANPERKSRSVPNTGRGGSQPPKGPWS). Residues 287-299 (SVGTPTRSGSTGP) are compositionally biased toward low complexity.

Belongs to the peptidase M48B family. The cofactor is Zn(2+).

Its subcellular location is the cell inner membrane. The chain is Protease HtpX homolog from Rhizobium rhizogenes (strain K84 / ATCC BAA-868) (Agrobacterium radiobacter).